We begin with the raw amino-acid sequence, 106 residues long: Ig kappa chain C region, B allele (106 aa).

An Ig-like domain is found at 5-102; that stretch reads PTVSIFPPST…SSSPVVKSFN (98 aa). Cys-26 and Cys-86 form a disulfide bridge.

This Rattus norvegicus (Rat) protein is Ig kappa chain C region, B allele.